Consider the following 401-residue polypeptide: Cysteine desulfurase CsdA (401 aa).

Lysine 222 carries the post-translational modification N6-(pyridoxal phosphate)lysine. Cysteine 358 acts as the Cysteine persulfide intermediate in catalysis.

This sequence belongs to the class-V pyridoxal-phosphate-dependent aminotransferase family. Csd subfamily. As to quaternary structure, homodimer. Forms a heterodimer with CsdE. The cofactor is pyridoxal 5'-phosphate.

The enzyme catalyses (sulfur carrier)-H + L-cysteine = (sulfur carrier)-SH + L-alanine. It catalyses the reaction L-selenocysteine + AH2 = hydrogenselenide + L-alanine + A + H(+). The catalysed reaction is 3-sulfino-L-alanine + H2O = sulfite + L-alanine + H(+). Cysteine desulfurase activity is increased 2-fold in the presence of CsdE. In terms of biological role, catalyzes the removal of elemental sulfur and selenium atoms from L-cysteine, L-cystine, L-selenocysteine, and L-selenocystine to produce L-alanine, and transiently retains the released sulfur atom on a cysteine residue, in the form of a persulfide. Can also desulfinate L-cysteine sulfinate (3-sulfino-L-alanine), which is the best substrate of the enzyme. Functions as a selenium delivery protein in the pathway for the biosynthesis of selenophosphate. Seems to participate in Fe/S biogenesis by recruiting the SufBCD-SufE proteins. Transfers sulfur to CsdE that increases the cysteine desulfurase activity of CsdA. Can also transfer sulfur directly to TcdA/CsdL in vitro. Appears to support the function of TcdA in the generation of cyclic threonylcarbamoyladenosine at position 37 (ct(6)A37) in tRNAs that read codons beginning with adenine. The sequence is that of Cysteine desulfurase CsdA (csdA) from Escherichia coli (strain K12).